The chain runs to 632 residues: Probable potassium transport system protein Kup 1 (632 aa).

12 helical membrane-spanning segments follow: residues Leu19–Leu39, Val59–Val79, Val110–Pro130, Pro146–Ile166, Phe178–Val198, Ile213–Val233, Trp256–Leu276, Met298–Phe318, Ile346–Phe366, Ala373–Val393, Pro403–Ala423, and Val428–Thr448.

This sequence belongs to the HAK/KUP transporter (TC 2.A.72) family.

It is found in the cell inner membrane. It carries out the reaction K(+)(in) + H(+)(in) = K(+)(out) + H(+)(out). Functionally, transport of potassium into the cell. Likely operates as a K(+):H(+) symporter. This Cupriavidus necator (strain ATCC 17699 / DSM 428 / KCTC 22496 / NCIMB 10442 / H16 / Stanier 337) (Ralstonia eutropha) protein is Probable potassium transport system protein Kup 1.